The sequence spans 84 residues: MASTEGEHNAGVDPAEVPSVAWGWSRINHHTWHIVGLFAIGLLLAMLRGNHIGHVENWYLIGFAALVFFVLIRDLLGRRRGWIR.

2 helical membrane-spanning segments follow: residues 27–47 (INHH…LAML) and 52–72 (IGHV…FVLI).

It to M.tuberculosis Rv2876.

The protein resides in the cell membrane. This is an uncharacterized protein from Mycobacterium leprae (strain TN).